A 715-amino-acid polypeptide reads, in one-letter code: Scinderin (715 aa).

The actin-severing stretch occupies residues 1–363 (MARELYHEEF…DGFGKVYVTE (363 aa)). The stretch at 27–76 (LELVPVPQSAHGDFYVGDAYLVLHTAKTSRGFTYHLHFWLGKECSQDEST) is one Gelsolin-like 1 repeat. At Tyr102 the chain carries Phosphotyrosine. A 1,2-diacyl-sn-glycero-3-phospho-(1D-myo-inositol-4,5-bisphosphate) is bound by residues 112–119 (KGGLKYKA) and 138–146 (RLLHVKGRR). Gelsolin-like repeat units follow at residues 148–188 (VRAT…YERL), 265–307 (VVAE…QERK), 398–451 (VEIW…DELT), and 523–564 (TRIV…EEEK). The interval 364-715 (KVAQIKQIPF…WFLGWDSSKW (352 aa)) is ca(2+)-dependent actin binding. The Ca(2+) site is built by Asn538, Asp539, and Glu562. At Tyr599 the chain carries Phosphotyrosine. The stretch at 626–668 (FVIEEIPGEFTQDDLAEDDVMLLDAWEQIFIWIGKDANEVEKK) is one Gelsolin-like 6 repeat. Ca(2+)-binding residues include Asp643, Asp644, and Glu666.

The protein belongs to the villin/gelsolin family. Expressed in megakaryocytes.

The protein localises to the cytoplasm. It is found in the cytoskeleton. The protein resides in the cell projection. It localises to the podosome. In terms of biological role, ca(2+)-dependent actin filament-severing protein that has a regulatory function in exocytosis by affecting the organization of the microfilament network underneath the plasma membrane. Severing activity is inhibited by phosphatidylinositol 4,5-bis-phosphate (PIP2). In vitro, also has barbed end capping and nucleating activities in the presence of Ca(2+). Required for megakaryocyte differentiation, maturation, polyploidization and apoptosis with the release of platelet-like particles. Plays a role in osteoclastogenesis (OCG) and actin cytoskeletal organization in osteoclasts. Regulates chondrocyte proliferation and differentiation. Inhibits cell proliferation and tumorigenesis. Signaling is mediated by MAPK, p38 and JNK pathways. In Homo sapiens (Human), this protein is Scinderin.